The primary structure comprises 501 residues: MTDIQNKNYIIALDQGTTSSRAIIFDRDANVVCTAQREFTQHYPQAGWVEHDPMEIFATQSAVMVEALAQAGLHHDQVAAIGITNQRETTVVWDKVTGRPIYNAIVWQCRRSTEICQQLKRDGHEQYINDTTGLVTDPYFSGTKLKWILDNVEGSRERARNGELLFGTIDSWLIWKFTGGKTHVTDYTNASRTMLFNIHTLEWDAKMLEILDVPREMLPEVKSSSEIYGRTKSGIAIGGIAGDQQAALFGQMCVEAGQAKNTYGTGCFLLMNTGDKAVKSNHGMLTTIACGPRGEVAYALEGAVFNGGSTVQWLRDELKIIADATDTEYFAGKVKDSNGVYLVPAFTGLGAPYWDPYARGALFGLTRGVRVDHIIRAALESIAYQTRDVLDAMQQDSGERLKALRVDGGAVANNFLMQFQADILGTQVERPQMRETTALGAAYLAGLACGFWRSLDELRGKAVIEREFEPQLDEGAKEKLYAGWQKAVSRTRDWEPHEGAE.

Residue threonine 17 participates in ADP binding. Threonine 17, threonine 18, and serine 19 together coordinate ATP. Threonine 17 is a sn-glycerol 3-phosphate binding site. Arginine 21 lines the ADP pocket. Arginine 87, glutamate 88, tyrosine 139, and aspartate 243 together coordinate sn-glycerol 3-phosphate. Glycerol is bound by residues arginine 87, glutamate 88, tyrosine 139, aspartate 243, and glutamine 244. 2 residues coordinate ADP: threonine 265 and glycine 308. 4 residues coordinate ATP: threonine 265, glycine 308, glutamine 312, and glycine 409. The ADP site is built by glycine 409 and asparagine 413.

It belongs to the FGGY kinase family.

It catalyses the reaction glycerol + ATP = sn-glycerol 3-phosphate + ADP + H(+). Its pathway is polyol metabolism; glycerol degradation via glycerol kinase pathway; sn-glycerol 3-phosphate from glycerol: step 1/1. Inhibited by fructose 1,6-bisphosphate (FBP). Key enzyme in the regulation of glycerol uptake and metabolism. Catalyzes the phosphorylation of glycerol to yield sn-glycerol 3-phosphate. The sequence is that of Glycerol kinase from Pseudomonas fluorescens (strain SBW25).